The chain runs to 560 residues: MEGGSEHTKDPGGEGGDGESLAARPSKIKASSGPPTPPEPGELESEPEEEEEEEEEEEEEASQGGTAADEQAKVPKELTAAEAAGEEGPGEPGRPAKPQPEPEEPAEAGAEEPVQPKSGAGPEELDAEARAEELEQAAEGKEVRSQASLPLTRIGEEEAAAAPEAETERVEGEEEDEEETRRDGAESEGRAGEGRPAKSQEEGKPLGGRDEFEDLEWSEEVQKLQEQQLRSDLLDQYRSLLMERNRSQRYNLYLQHKIFEALRKKKGLEAAEVPDRGAQAEAPEKEQAYLRHLGMLEDLKKQQADDLQWYHQELGQLKQQCQEKLSRVEKEWRRFQALKKQVVMQAMGSCRMRGGRQAALREVEQILALEDKKEKEMSAVRLENVQLKQSLVHFETRMRTQEDLTQGLLLIDFEQLKIENQTFNEKIEERNEELLKLRNKVTNSVQVITHMKEKLHFMDTENACKKKQLAEIEAQVAQGRDILTKTKQAREGLRTDNIRLNQKCGLLGNDSLLRDLEEKVDKTQLLHQRLESLKRHHAGLTLSCRGVRQKIREAKAFLPS.

The segment covering 1–12 has biased composition (basic and acidic residues); the sequence is MEGGSEHTKDPG. Residues 1–209 form a disordered region; sequence MEGGSEHTKD…QEEGKPLGGR (209 aa). Acidic residues-rich tracts occupy residues 41-61 and 101-110; these read GELE…EEEA and EPEEPAEAGA. Basic and acidic residues-rich tracts occupy residues 127–144 and 179–209; these read AEAR…KEVR and ETRR…LGGR. Coiled coils occupy residues 357–481 and 510–536; these read QAAL…QGRD and DSLL…LKRH.

This sequence belongs to the CFAP184 family. Forms a complex with CFAP263; the interaction is required for functional activity in cilia.

Its subcellular location is the cell projection. It localises to the cilium. It is found in the cytoplasm. The protein resides in the cytoskeleton. The protein localises to the microtubule organizing center. Its subcellular location is the centrosome. In complex with CFAP263, acts as a regulator of ciliary beating that connects radial spoke 3 (RS3) to the inner dynein arm (IDA) and the nexin-dynein regulatory complex (N-DRC). The complex is positioned parallel to N-DRC and forms a connection between the arch at the base of RS3, the IDA tail and N-DRC. This is Cilia- and flagella-associated protein 184 (CFAP184) from Macaca fascicularis (Crab-eating macaque).